A 490-amino-acid polypeptide reads, in one-letter code: MTSKSSPLIFERSREGRYAYSLPKSDIKTNSVESLLDDKFIRKNKAEFPEVAELDLVRHYTELSNKNFGVDNGFYPLGSCTMKYNPKINEKVARIPGFSESHPLQDEDQVQGSLEIIYSLQEELKEITGMDEVTLQPAAGAHGEWTALMIFKAYHENNGEGHRDEVIVPDSAHGTNPASASFAGFKSVTVKSNERGEVNIDDLKRVVNENTAAIMLTNPNTLGIFEKNIMEIREIVHNAGGLLYYDGANLNAIMDKVRPGDMGFDAVHLNLHKTFTGPHGGGGPGSGPVGVVKELASYLPKPMVIKDGDKFKYDNDIKNSIGRVKPFYGNFGIYLRAYTYIRTMGATGLKEVSEAAVLNANYIKARLSKHFEIPYKQYCKHEFVLSGVRQKEFGVRTLDMAKRLLDFGVHPPTIYFPLNVEEGMMIEPTETESKETLDYFIDTLISIAEEAKNDPDKVLEAPHTTVIDRLDEATAARKPILKFENLKQEK.

Lys-273 carries the post-translational modification N6-(pyridoxal phosphate)lysine.

Belongs to the GcvP family. C-terminal subunit subfamily. In terms of assembly, the glycine cleavage system is composed of four proteins: P, T, L and H. In this organism, the P 'protein' is a heterodimer of two subunits. The cofactor is pyridoxal 5'-phosphate.

The enzyme catalyses N(6)-[(R)-lipoyl]-L-lysyl-[glycine-cleavage complex H protein] + glycine + H(+) = N(6)-[(R)-S(8)-aminomethyldihydrolipoyl]-L-lysyl-[glycine-cleavage complex H protein] + CO2. In terms of biological role, the glycine cleavage system catalyzes the degradation of glycine. The P protein binds the alpha-amino group of glycine through its pyridoxal phosphate cofactor; CO(2) is released and the remaining methylamine moiety is then transferred to the lipoamide cofactor of the H protein. In Staphylococcus aureus (strain Newman), this protein is Probable glycine dehydrogenase (decarboxylating) subunit 2.